The chain runs to 214 residues: Probable nicotinate-nucleotide adenylyltransferase (214 aa).

Belongs to the NadD family.

It carries out the reaction nicotinate beta-D-ribonucleotide + ATP + H(+) = deamido-NAD(+) + diphosphate. It participates in cofactor biosynthesis; NAD(+) biosynthesis; deamido-NAD(+) from nicotinate D-ribonucleotide: step 1/1. In terms of biological role, catalyzes the reversible adenylation of nicotinate mononucleotide (NaMN) to nicotinic acid adenine dinucleotide (NaAD). In Psychromonas ingrahamii (strain DSM 17664 / CCUG 51855 / 37), this protein is Probable nicotinate-nucleotide adenylyltransferase.